The following is a 175-amino-acid chain: Regenerating islet-derived protein 3-alpha (175 aa).

The first 26 residues, 1-26 (MLPPMALPSVSWMLLSCLMLLSQVQG), serve as a signal peptide directing secretion. Positions 27-37 (EEPQRELPSAR) are excised as a propeptide. 3 disulfides stabilise this stretch: Cys40-Cys51, Cys68-Cys171, and Cys146-Cys163. Residues 47 to 172 (YGSHCYALFL…CNVRLPYVCK (126 aa)) form the C-type lectin domain. 2 residues coordinate Zn(2+): His50 and His107. Positions 103 to 118 (WIGLHDPTQGTEPNGE) are sufficient to activate EXTL3. The EPN motif lies at 114–116 (EPN). The Zn(2+) site is built by Glu121 and His145.

As to quaternary structure, forms a hexameric membrane-permeabilizing oligomeric pore on membrane phospholipids. The hexamer is formed by three dimers related by helical symmetry. Forms filaments, filamentation traps pore complexes and limits damage to host cells. Interacts with EXTL3. Post-translationally, proteolytic processing by trypsin removes an inhibitory N-terminal propeptide and is essential for peptidoglycan binding and antibacterial activity. As to expression, expressed by keratinocytes. Highly expressed in epidermal keratinocytes of psoriasis patients (at protein level). Constitutively expressed in intestine. Low expression is found in healthy pancreas. Overexpressed during the acute phase of pancreatitis and in some patients with chronic pancreatitis.

The protein localises to the secreted. Lipopolysaccharide inhibits pore-forming activity, explaining why is bactericidal for Gram-positive but not Gram-negative bacteria. Bactericidal C-type lectin which acts exclusively against Gram-positive bacteria and mediates bacterial killing by binding to surface-exposed carbohydrate moieties of peptidoglycan. Binds membrane phospholipids and kills bacteria by forming a hexameric membrane-permeabilizing oligomeric pore. Its function is as follows. Acts as a hormone in response to different stimuli like anti-inflammatory signals, such as IL17A, or gut microbiome. Secreted by different cell types to activate its receptor EXTL3 and induce cell specific signaling pathways. Induced by IL17A in keratinocytes, regulates keratinocyte proliferation and differentiation after skin injury via activation of EXTL3-PI3K-AKT signaling pathway. In parallel, inhibits skin inflammation through the inhibition of inflammatory cytokines such as IL6 and TNF. In pancreas, is able to permealize beta-cells membrane and stimulate their proliferation. In terms of biological role, has bacteriostatic activity. The sequence is that of Regenerating islet-derived protein 3-alpha from Homo sapiens (Human).